The following is a 1128-amino-acid chain: Major DNA-binding protein (1128 aa).

Residues 1104 to 1128 are required for nuclear localization; that stretch reads LGGGGQGSGGRRKRRLATVLPGLEV.

It belongs to the herpesviridae major DNA-binding protein family. Homooligomers. Forms double-helical filaments necessary for the formation of replication compartments within the host nucleus. Interacts with the origin-binding protein. Interacts with the helicase primase complex; this interaction stimulates primer synthesis activity of the helicase-primase complex. Interacts with the DNA polymerase. Interacts with the alkaline exonuclease; this interaction increases its nuclease processivity.

The protein resides in the virion tegument. It localises to the host nucleus. Functionally, plays several crucial roles in viral infection. Participates in the opening of the viral DNA origin to initiate replication by interacting with the origin-binding protein. May disrupt loops, hairpins and other secondary structures present on ssDNA to reduce and eliminate pausing of viral DNA polymerase at specific sites during elongation. Promotes viral DNA recombination by performing strand-transfer, characterized by the ability to transfer a DNA strand from a linear duplex to a complementary single-stranded DNA circle. Can also catalyze the renaturation of complementary single strands. Additionally, reorganizes the host cell nucleus, leading to the formation of prereplicative sites and replication compartments. This process is driven by the protein which can form double-helical filaments in the absence of DNA. This chain is Major DNA-binding protein, found in Homo sapiens (Human).